The following is a 170-amino-acid chain: Cyclic pyranopterin monophosphate synthase (170 aa).

Substrate is bound by residues 75-77 (MCH) and 115-116 (ME). The active site involves aspartate 130.

The protein belongs to the MoaC family. In terms of assembly, homohexamer; trimer of dimers.

The catalysed reaction is (8S)-3',8-cyclo-7,8-dihydroguanosine 5'-triphosphate = cyclic pyranopterin phosphate + diphosphate. It participates in cofactor biosynthesis; molybdopterin biosynthesis. In terms of biological role, catalyzes the conversion of (8S)-3',8-cyclo-7,8-dihydroguanosine 5'-triphosphate to cyclic pyranopterin monophosphate (cPMP). This Bacillus subtilis (strain 168) protein is Cyclic pyranopterin monophosphate synthase.